A 1050-amino-acid chain; its full sequence is Antibiotic efflux pump membrane transporter ArpB (1050 aa).

12 helical membrane passes run 10 to 30 (IFAW…ILKL), 339 to 359 (GVIH…YLFL), 370 to 390 (MTVP…GFSI), 393 to 413 (LTMF…IVVV), 440 to 460 (GALV…AFFG), 472 to 492 (ITIV…TPAL), 539 to 559 (VPFL…FARI), 871 to 891 (MPAL…ALYE), 893 to 913 (WSIP…ALIA), 923 to 943 (VYFL…AILI), 972 to 992 (IIMT…ASGA), and 1004 to 1024 (VIGG…LFFV).

It belongs to the resistance-nodulation-cell division (RND) (TC 2.A.6) family.

It is found in the cell inner membrane. The inner membrane transporter component of an antibiotic efflux pump. Confers resistance to numerous structurally unrelated antibiotics such as carbenicillin, chloramphenicol, erythromycin, novobiocin, streptomycin and tetracycline. Is not involved in organic solvent efflux. This Pseudomonas putida (Arthrobacter siderocapsulatus) protein is Antibiotic efflux pump membrane transporter ArpB (arpB).